Here is a 744-residue protein sequence, read N- to C-terminus: Biotin sulfoxide reductase (744 aa).

Ser-121 is a Mo-bis(molybdopterin guanine dinucleotide) binding site.

This sequence belongs to the prokaryotic molybdopterin-containing oxidoreductase family. It depends on Mo-bis(molybdopterin guanine dinucleotide) as a cofactor.

In terms of biological role, this enzyme may serve as a scavenger, allowing the cell to utilize biotin sulfoxide as a biotin source. It reduces a spontaneous oxidation product of biotin, D-biotin D-sulfoxide (BSO or BDS), back to biotin. In Cereibacter sphaeroides (Rhodobacter sphaeroides), this protein is Biotin sulfoxide reductase.